Consider the following 148-residue polypeptide: Large ribosomal subunit protein bL9 (148 aa).

The protein belongs to the bacterial ribosomal protein bL9 family.

Its function is as follows. Binds to the 23S rRNA. The sequence is that of Large ribosomal subunit protein bL9 from Oceanobacillus iheyensis (strain DSM 14371 / CIP 107618 / JCM 11309 / KCTC 3954 / HTE831).